Consider the following 176-residue polypeptide: Tubulin polymerization-promoting protein family member 3 (176 aa).

The residue at position 2 (A2) is an N-acetylalanine.

The protein belongs to the TPPP family.

It is found in the cytoplasm. Its subcellular location is the cytoskeleton. Regulator of microtubule dynamic that has microtubule bundling activity. Required for embryo implantation; possibly by regulating beta-catenin. Also required for decidualization via regulation of beta-catenin. This Rattus norvegicus (Rat) protein is Tubulin polymerization-promoting protein family member 3 (Tppp3).